The following is a 522-amino-acid chain: BTB/POZ domain-containing protein 3 (522 aa).

The tract at residues 25–44 (RSKKSSKKANTSSSSSNSSK) is disordered. Positions 32-44 (KANTSSSSSNSSK) are enriched in low complexity. Residues 120-190 (ADVHFVVGPP…IYCDEIDLAA (71 aa)) enclose the BTB domain. In terms of domain architecture, BACK spans 235–300 (FEEPDLTQRC…NWAEVECQRQ (66 aa)).

Its subcellular location is the cytoplasm. It is found in the cytosol. It localises to the nucleus. In terms of biological role, acts as a key regulator of dendritic field orientation during development of sensory cortex. Also directs dendrites toward active axon terminals when ectopically expressed. This chain is BTB/POZ domain-containing protein 3 (BTBD3), found in Homo sapiens (Human).